A 195-amino-acid chain; its full sequence is CASP-like protein 1E2 (195 aa).

The Cytoplasmic portion of the chain corresponds to 1 to 29; the sequence is MEVESKTSFGGMESKSKEVKVVTGGKLRP. The helical transmembrane segment at 30–50 threads the bilayer; the sequence is FDLVLRVVALALTLVAAVLLG. The Extracellular portion of the chain corresponds to 51–82; the sequence is VDKQTKVVSLQLLPTLPPMDVPVTAKWRYLSA. A helical membrane pass occupies residues 83 to 103; it reads FVYFVVSNAIACSYAALSLLL. Residues 104-122 lie on the Cytoplasmic side of the membrane; sequence SVGNSKGNKGLGLAITVMD. Residues 123–143 form a helical membrane-spanning segment; sequence LVMVALLFSSNGAAGAIGLMG. Residues 144-165 lie on the Extracellular side of the membrane; that stretch reads YEGNSRVRWGKVCNVFGKFCNQ. Residues 166–186 traverse the membrane as a helical segment; the sequence is VAVALGLSFFGGLAFFLLVVM. The Cytoplasmic portion of the chain corresponds to 187 to 195; it reads AAFALNKRH.

This sequence belongs to the Casparian strip membrane proteins (CASP) family. Homodimer and heterodimers.

Its subcellular location is the cell membrane. This is CASP-like protein 1E2 from Vitis vinifera (Grape).